Here is a 648-residue protein sequence, read N- to C-terminus: 1-deoxy-D-xylulose-5-phosphate synthase 1 (648 aa).

Residues histidine 82 and 123–125 (AHS) each bind thiamine diphosphate. Residue aspartate 154 coordinates Mg(2+). Thiamine diphosphate is bound by residues 155–156 (GS), asparagine 183, tyrosine 292, and glutamate 374. Asparagine 183 contacts Mg(2+).

Belongs to the transketolase family. DXPS subfamily. As to quaternary structure, homodimer. Requires Mg(2+) as cofactor. Thiamine diphosphate is required as a cofactor.

It catalyses the reaction D-glyceraldehyde 3-phosphate + pyruvate + H(+) = 1-deoxy-D-xylulose 5-phosphate + CO2. Its pathway is metabolic intermediate biosynthesis; 1-deoxy-D-xylulose 5-phosphate biosynthesis; 1-deoxy-D-xylulose 5-phosphate from D-glyceraldehyde 3-phosphate and pyruvate: step 1/1. Catalyzes the acyloin condensation reaction between C atoms 2 and 3 of pyruvate and glyceraldehyde 3-phosphate to yield 1-deoxy-D-xylulose-5-phosphate (DXP). The sequence is that of 1-deoxy-D-xylulose-5-phosphate synthase 1 from Cereibacter sphaeroides (strain ATCC 17023 / DSM 158 / JCM 6121 / CCUG 31486 / LMG 2827 / NBRC 12203 / NCIMB 8253 / ATH 2.4.1.) (Rhodobacter sphaeroides).